The sequence spans 451 residues: Cobalamin reductase PduS (451 aa).

4Fe-4S ferredoxin-type domains follow at residues 255–284 (TVLSVARTVCEQCRLCTDLCPRHLIGHELS) and 300–330 (PQLLLSALTCSECNVCESVACPVGISPMRIN). Residues Cys264, Cys267, Cys270, Cys274, Cys309, Cys312, Cys315, and Cys320 each coordinate [4Fe-4S] cluster.

The protein belongs to the PduS cobalamin reductase family. In terms of assembly, monomeric when purified anaerobically, dimeric under aerobic conditions. Forms a complex with PduO. Interacts with PduT, probably via the N-terminus of PduS. [4Fe-4S] cluster is required as a cofactor. It depends on FMN as a cofactor.

It localises to the bacterial microcompartment. It functions in the pathway polyol metabolism; 1,2-propanediol degradation. In terms of biological role, a protein that aids in conversion of cob(III)alamin to cob(II)alamin and then to cob(I)alamin in the bacterial microcompartment (BMC) dedicated to 1,2-propanediol (1,2-PD) degradation. The latter step requires PduO. No free cob(I)alamin is released, suggesting a complex is formed with PduO that finishes conversion to adenosylcobalamin. PduS and PduO allow regeneration of the adenosylcobalamin cofactor within the BMC. Another study showed reduction of cob(II)alamin to cob(I)alamin in the absence of PduO. Both reactions require NADH. Cyanocobalamin (CN-Cbl) is not a substrate for the first reaction. Cobalamin reduction probably occurs spontaneously in the presence of free reduced flavin nucleotides, this protein may be involved in electron transfer for this reduction. Functionally, the 1,2-PD-specific bacterial microcompartment (BMC) concentrates low levels of 1,2-PD catabolic enzymes, concentrates volatile reaction intermediates thus enhancing pathway flux and keeps the level of toxic, mutagenic propionaldehyde low. In Salmonella typhimurium (strain LT2 / SGSC1412 / ATCC 700720), this protein is Cobalamin reductase PduS.